We begin with the raw amino-acid sequence, 74 residues long: U4-theraphotoxin-Cg1a (74 aa).

A signal peptide spans 1-19 (MNATIFALLLLLNLAMYNA). Positions 20 to 39 (AEQSSETDMDDTLLIPEINR) are excised as a propeptide. 3 disulfide bridges follow: cysteine 42-cysteine 56, cysteine 49-cysteine 61, and cysteine 55-cysteine 71.

It belongs to the neurotoxin 36 family. 01 subfamily. In terms of tissue distribution, expressed by the venom gland.

The protein localises to the secreted. Its function is as follows. Probable ion channel inhibitor. In Chilobrachys guangxiensis (Chinese earth tiger tarantula), this protein is U4-theraphotoxin-Cg1a.